A 434-amino-acid chain; its full sequence is D-amino acid dehydrogenase (434 aa).

An FAD-binding site is contributed by 3-17; the sequence is VIVLGSGVIGTTTAY.

The protein belongs to the DadA oxidoreductase family. It depends on FAD as a cofactor.

The catalysed reaction is a D-alpha-amino acid + A + H2O = a 2-oxocarboxylate + AH2 + NH4(+). It participates in amino-acid degradation; D-alanine degradation; NH(3) and pyruvate from D-alanine: step 1/1. Oxidative deamination of D-amino acids. The chain is D-amino acid dehydrogenase from Bordetella petrii (strain ATCC BAA-461 / DSM 12804 / CCUG 43448).